The following is a 189-amino-acid chain: MRVMGVDPGLTRCGLSMVEGGHGRTVTALDVDVVRTPADMDLAHRLMLVADAAEYWMDTHRPGAVAIERVFAQHNVRTAMGTAQAGGVIALAAARRDIPVVFHTPSEVKAAVTGNGNADKAQVTAMVTRILGLQTAPKPADAADALALAICHCWRAPLLARMAAAEAKAAEAKRRYTERLAEQRKAVRG.

Residues D7, E68, and D141 contribute to the active site. The Mg(2+) site is built by D7, E68, and D141.

This sequence belongs to the RuvC family. As to quaternary structure, homodimer which binds Holliday junction (HJ) DNA. The HJ becomes 2-fold symmetrical on binding to RuvC with unstacked arms; it has a different conformation from HJ DNA in complex with RuvA. In the full resolvosome a probable DNA-RuvA(4)-RuvB(12)-RuvC(2) complex forms which resolves the HJ. It depends on Mg(2+) as a cofactor.

Its subcellular location is the cytoplasm. It carries out the reaction Endonucleolytic cleavage at a junction such as a reciprocal single-stranded crossover between two homologous DNA duplexes (Holliday junction).. In terms of biological role, the RuvA-RuvB-RuvC complex processes Holliday junction (HJ) DNA during genetic recombination and DNA repair. Endonuclease that resolves HJ intermediates. Cleaves cruciform DNA by making single-stranded nicks across the HJ at symmetrical positions within the homologous arms, yielding a 5'-phosphate and a 3'-hydroxyl group; requires a central core of homology in the junction. The consensus cleavage sequence is 5'-(A/T)TT(C/G)-3'. Cleavage occurs on the 3'-side of the TT dinucleotide at the point of strand exchange. HJ branch migration catalyzed by RuvA-RuvB allows RuvC to scan DNA until it finds its consensus sequence, where it cleaves and resolves the cruciform DNA. This Nocardia farcinica (strain IFM 10152) protein is Crossover junction endodeoxyribonuclease RuvC.